We begin with the raw amino-acid sequence, 117 residues long: Large ribosomal subunit protein bL19 (117 aa).

This sequence belongs to the bacterial ribosomal protein bL19 family.

Its function is as follows. This protein is located at the 30S-50S ribosomal subunit interface and may play a role in the structure and function of the aminoacyl-tRNA binding site. This is Large ribosomal subunit protein bL19 from Shewanella frigidimarina (strain NCIMB 400).